The sequence spans 369 residues: C2 calcium-dependent domain-containing protein 4A (369 aa).

2 disordered regions span residues 151–176 (PRAP…ARRP) and 197–240 (RSRR…PFPE). The span at 153 to 168 (APGPATPAAPGCPRPP) shows a compositional bias: pro residues. Residues 220 to 237 (SQSPARAPSTSPPSSRVP) show a composition bias toward low complexity. Residues 253–369 (AGDALRLAAE…ELSLGALLLL (117 aa)) form the C2 domain.

This sequence belongs to the C2CD4 family. In terms of tissue distribution, specifically expressed in endothelial cells.

It is found in the nucleus. Its function is as follows. May be involved in inflammatory process. May regulate cell architecture and adhesion. This Homo sapiens (Human) protein is C2 calcium-dependent domain-containing protein 4A (C2CD4A).